Consider the following 664-residue polypeptide: Protein fem-1 homolog CG6966 (664 aa).

ANK repeat units lie at residues 40-70 (NGAT…NVEQ), 82-111 (EDAP…NVNS), 115-144 (TNST…DFEV), 148-177 (HGHT…DVNR), 181-210 (KGNT…TMDV), and 213-242 (YGMT…VSRE). TPR repeat units lie at residues 245 to 279 (IHAL…RAVE) and 335 to 368 (SYYI…QQKI). A disordered region spans residues 433–460 (QQKDQQHPQKQLPAADKSPSCSASSSAS). A compositionally biased stretch (low complexity) spans 450-460 (SPSCSASSSAS). ANK repeat units lie at residues 529-571 (FDRT…DPNA) and 575-605 (AGNT…HLDT).

This sequence belongs to the fem-1 family. In terms of assembly, component of a CRL2 E3 ubiquitin-protein ligase complex, also named ECS (Elongin BC-CUL2/5-SOCS-box protein) complex.

Its pathway is protein modification; protein ubiquitination. Substrate-recognition component of a Cul2-RING (CRL2) E3 ubiquitin-protein ligase complex of the DesCEND (destruction via C-end degrons) pathway, which recognizes a C-degron located at the extreme C terminus of target proteins, leading to their ubiquitination and degradation. The C-degron recognized by the DesCEND pathway is usually a motif of less than ten residues and can be present in full-length proteins, truncated proteins or proteolytically cleaved forms. The polypeptide is Protein fem-1 homolog CG6966 (Drosophila melanogaster (Fruit fly)).